Reading from the N-terminus, the 515-residue chain is 1-pyrroline-5-carboxylate dehydrogenase (515 aa).

Catalysis depends on residues Glu286 and Cys320.

It belongs to the aldehyde dehydrogenase family. RocA subfamily.

The enzyme catalyses L-glutamate 5-semialdehyde + NAD(+) + H2O = L-glutamate + NADH + 2 H(+). The protein operates within amino-acid degradation; L-proline degradation into L-glutamate; L-glutamate from L-proline: step 2/2. In Geobacillus thermodenitrificans (strain NG80-2), this protein is 1-pyrroline-5-carboxylate dehydrogenase.